The chain runs to 347 residues: D-alanine--D-alanine ligase (347 aa).

One can recognise an ATP-grasp domain in the interval 134-332; the sequence is KLYAKDLGVK…LAQSLPKTPK (199 aa). An ATP-binding site is contributed by 161 to 216; the sequence is LIKFNFPFIVKPSNAGSSLGVNVVKEEKELVYALDSAFEYSKEVLIEPFIQGVKEY. The Mg(2+) site is built by aspartate 288, glutamate 300, and asparagine 302.

This sequence belongs to the D-alanine--D-alanine ligase family. Mg(2+) serves as cofactor. The cofactor is Mn(2+).

The protein resides in the cytoplasm. The catalysed reaction is 2 D-alanine + ATP = D-alanyl-D-alanine + ADP + phosphate + H(+). It functions in the pathway cell wall biogenesis; peptidoglycan biosynthesis. Cell wall formation. The polypeptide is D-alanine--D-alanine ligase (Helicobacter pylori (strain P12)).